We begin with the raw amino-acid sequence, 310 residues long: Glutaminase (310 aa).

Positions 66, 117, 161, 168, 192, 244, and 262 each coordinate substrate.

It belongs to the glutaminase family. As to quaternary structure, homotetramer.

It carries out the reaction L-glutamine + H2O = L-glutamate + NH4(+). This Desulfovibrio desulfuricans (strain ATCC 27774 / DSM 6949 / MB) protein is Glutaminase.